A 78-amino-acid polypeptide reads, in one-letter code: Small ribosomal subunit protein bS18 (78 aa).

Belongs to the bacterial ribosomal protein bS18 family. Part of the 30S ribosomal subunit. Forms a tight heterodimer with protein bS6.

Binds as a heterodimer with protein bS6 to the central domain of the 16S rRNA, where it helps stabilize the platform of the 30S subunit. In Kocuria rhizophila (strain ATCC 9341 / DSM 348 / NBRC 103217 / DC2201), this protein is Small ribosomal subunit protein bS18.